The primary structure comprises 59 residues: Large ribosomal subunit protein bL32 (59 aa).

The tract at residues 1-28 (MAVQQNKKSPSKRGMHRAHDFLTDPPLA) is disordered.

The protein belongs to the bacterial ribosomal protein bL32 family.

This Aromatoleum aromaticum (strain DSM 19018 / LMG 30748 / EbN1) (Azoarcus sp. (strain EbN1)) protein is Large ribosomal subunit protein bL32.